Here is a 366-residue protein sequence, read N- to C-terminus: Histone-lysine N-methyltransferase SETD7 (366 aa).

MORN repeat units lie at residues 36 to 58 (FEGH…DGST), 59 to 81 (LEGF…DGGS), and 106 to 128 (FKGQ…DGGS). The region spanning 214-336 (ERVYVNDSLI…KDEELTVAYG (123 aa)) is the SET domain. S-adenosyl-L-methionine is bound by residues 226-228 (AGE), Asn296, and His297.

It belongs to the class V-like SAM-binding methyltransferase superfamily. Histone-lysine methyltransferase family. SET7 subfamily.

The protein resides in the nucleus. It is found in the chromosome. The catalysed reaction is L-lysyl(4)-[histone H3] + S-adenosyl-L-methionine = N(6)-methyl-L-lysyl(4)-[histone H3] + S-adenosyl-L-homocysteine + H(+). It carries out the reaction L-lysyl-[protein] + S-adenosyl-L-methionine = N(6)-methyl-L-lysyl-[protein] + S-adenosyl-L-homocysteine + H(+). Histone methyltransferase that specifically monomethylates 'Lys-4' of histone H3. H3 'Lys-4' methylation represents a specific tag for epigenetic transcriptional activation. Plays a central role in the transcriptional activation of genes. Also has methyltransferase activity toward non-histone proteins. This chain is Histone-lysine N-methyltransferase SETD7 (setd7), found in Xenopus tropicalis (Western clawed frog).